A 67-amino-acid chain; its full sequence is Protein SlyX homolog (67 aa).

It belongs to the SlyX family.

This Mesorhizobium japonicum (strain LMG 29417 / CECT 9101 / MAFF 303099) (Mesorhizobium loti (strain MAFF 303099)) protein is Protein SlyX homolog.